The following is a 178-amino-acid chain: NADH-quinone oxidoreductase subunit I (178 aa).

4Fe-4S ferredoxin-type domains are found at residues 45-74 (RHPD…VEAA) and 90-119 (KVYE…LGNE). Cysteine 54, cysteine 57, cysteine 60, cysteine 64, cysteine 99, cysteine 102, cysteine 105, and cysteine 109 together coordinate [4Fe-4S] cluster.

It belongs to the complex I 23 kDa subunit family. As to quaternary structure, NDH-1 is composed of 15 different subunits. Subunits NuoA, H, J, K, L, M, N constitute the membrane sector of the complex. It depends on [4Fe-4S] cluster as a cofactor.

The protein resides in the cell membrane. The catalysed reaction is a quinone + NADH + 5 H(+)(in) = a quinol + NAD(+) + 4 H(+)(out). Its function is as follows. NDH-1 shuttles electrons from NADH, via FMN and iron-sulfur (Fe-S) centers, to quinones in the respiratory chain. The immediate electron acceptor for the enzyme in this species is believed to be ubiquinone. Couples the redox reaction to proton translocation (for every two electrons transferred, four hydrogen ions are translocated across the cytoplasmic membrane), and thus conserves the redox energy in a proton gradient. This Deinococcus radiodurans (strain ATCC 13939 / DSM 20539 / JCM 16871 / CCUG 27074 / LMG 4051 / NBRC 15346 / NCIMB 9279 / VKM B-1422 / R1) protein is NADH-quinone oxidoreductase subunit I.